A 122-amino-acid chain; its full sequence is UPF0102 protein NGR_c36770 (122 aa).

This sequence belongs to the UPF0102 family.

The polypeptide is UPF0102 protein NGR_c36770 (Sinorhizobium fredii (strain NBRC 101917 / NGR234)).